A 122-amino-acid chain; its full sequence is Large ribosomal subunit protein uL18 (122 aa).

This sequence belongs to the universal ribosomal protein uL18 family. As to quaternary structure, part of the 50S ribosomal subunit; part of the 5S rRNA/L5/L18/L25 subcomplex. Contacts the 5S and 23S rRNAs.

Functionally, this is one of the proteins that bind and probably mediate the attachment of the 5S RNA into the large ribosomal subunit, where it forms part of the central protuberance. This Desulforamulus reducens (strain ATCC BAA-1160 / DSM 100696 / MI-1) (Desulfotomaculum reducens) protein is Large ribosomal subunit protein uL18.